A 298-amino-acid chain; its full sequence is MSGELANYKRLEKVGEGTYGVVYKALDLRPGQGQRVVALKKIRLESEDEGVPSTAIREISLLKELKDDNIVRLYDIVHSDAHKLYLVFEFLDLDLKRYMEGIPKDQPLGADIVKKFMMQLCKGIAYCHSHRILHRDLKPQNLLINKDGNLKLGDFGLARAFGVPLRAYTHEIVTLWYRAPEVLLGGKQYSTGVDTWSIGCIFAEMCNRKPIFSGDSEIDQIFKIFRVLGTPNEAIWPDIVYLPDFKPSFPQWRRKDLSQVVPSLDPRGIDLLDKLLAYDPINRISARRAAIHPYFQES.

Ser2 carries the N-acetylserine modification. Positions 8-295 constitute a Protein kinase domain; the sequence is YKRLEKVGEG…ARRAAIHPYF (288 aa). ATP is bound by residues 14–22 and Lys40; that span reads VGEGTYGVV. Residue Tyr19 is modified to Phosphotyrosine. The active-site Proton acceptor is the Asp136. Phosphothreonine is present on Thr169.

Belongs to the protein kinase superfamily. CMGC Ser/Thr protein kinase family. CDC2/CDKX subfamily. Forms a stable but non-covalent complex with the CKS1 protein and with a cyclin.

It catalyses the reaction L-seryl-[protein] + ATP = O-phospho-L-seryl-[protein] + ADP + H(+). It carries out the reaction L-threonyl-[protein] + ATP = O-phospho-L-threonyl-[protein] + ADP + H(+). With respect to regulation, phosphorylation at Thr-18 or Tyr-19 inactivates the enzyme, while phosphorylation at Thr-169 activates it. Its function is as follows. Cyclin-dependent kinase that acts as a master regulator of the mitotic and meiotic cell cycles. Required to drive the G1-S transition. More than 200 substrates have been identified. Substrate specificity is in part regulated by the bound cyclin protein. Phosphorylates YTA7 during S-phase to promote transcription of histones. May phosphorylate CNN1, to contribute to the enrichment of CNN1 on anaphase kinetochores. The sequence is that of Cyclin-dependent kinase 1 from Saccharomyces cerevisiae (strain ATCC 204508 / S288c) (Baker's yeast).